The sequence spans 207 residues: Partner of Y14 and mago (207 aa).

Disordered stretches follow at residues 1-28 and 52-133; these read MSTY…KARR and QRQA…NSIS. Positions 64-91 form a coiled coil; the sequence is LLAAESKKEREKQERTRAKKQEKESGRQ. Basic and acidic residues predominate over residues 68–90; it reads ESKKEREKQERTRAKKQEKESGR. Residues 123-133 are compositionally biased toward polar residues; that stretch reads PSGSRDINSIS. Residues 152-184 adopt a coiled-coil conformation; sequence AKQLKKLRKKIREIEQIESRIQAGEQKKLDKDQ.

Belongs to the pym family. In terms of assembly, interacts (via N-terminus) with mago and tsu/RBM8A; the interaction is direct. Expression detected in the ovary. In the oocyte expressed in the germarium, nurse cell and follicle cell.

The protein localises to the cytoplasm. The protein resides in the nucleus. Regulator of the exon junction complex (EJC), a multiprotein complex that associates immediately upstream of the exon-exon junction on mRNAs and serves as a positional landmark for the intron exon structure of genes and directs post-transcriptional processes in the cytoplasm such as mRNA export, nonsense-mediated mRNA decay (NMD) or translation. Acts as an EJC disassembly factor by disrupting mature EJC from spliced mRNAs. Required for normal localization of osk mRNA to the posterior pole of the developing oocyte. Does not interact with the small ribosomal unit or components of the translation initiation complex. May not function in cap-dependent translation regulation. The protein is Partner of Y14 and mago of Drosophila melanogaster (Fruit fly).